A 273-amino-acid polypeptide reads, in one-letter code: 4-diphosphocytidyl-2-C-methyl-D-erythritol kinase (273 aa).

The active site involves Lys12. 90-100 serves as a coordination point for ATP; the sequence is PVASGIGGGSA. Asp122 is an active-site residue.

Belongs to the GHMP kinase family. IspE subfamily.

It catalyses the reaction 4-CDP-2-C-methyl-D-erythritol + ATP = 4-CDP-2-C-methyl-D-erythritol 2-phosphate + ADP + H(+). Its pathway is isoprenoid biosynthesis; isopentenyl diphosphate biosynthesis via DXP pathway; isopentenyl diphosphate from 1-deoxy-D-xylulose 5-phosphate: step 3/6. Functionally, catalyzes the phosphorylation of the position 2 hydroxy group of 4-diphosphocytidyl-2C-methyl-D-erythritol. This is 4-diphosphocytidyl-2-C-methyl-D-erythritol kinase from Paracoccus denitrificans (strain Pd 1222).